Reading from the N-terminus, the 399-residue chain is uncharacterized protein (399 aa).

Residues 375–399 form a disordered region; the sequence is AAGGHRGSHGKSEQAATVRVVDDRR.

This sequence belongs to the mycobacterial PPE family.

This is an uncharacterized protein from Mycobacterium tuberculosis (strain ATCC 25618 / H37Rv).